A 74-amino-acid chain; its full sequence is Brevinin-2Ta (74 aa).

An N-terminal signal peptide occupies residues 1 to 22; the sequence is MFTMKKSLLLFFFLGTISLSLC. Positions 23–41 are excised as a propeptide; that stretch reads QEERNADEDDGEMTEEEKR. Cys-68 and Cys-74 are oxidised to a cystine.

Belongs to the frog skin active peptide (FSAP) family. Brevinin subfamily. In terms of tissue distribution, expressed by the skin glands.

The protein localises to the secreted. In terms of biological role, antimicrobial peptide. The polypeptide is Brevinin-2Ta (Rana temporaria (European common frog)).